A 377-amino-acid chain; its full sequence is Erythronate-4-phosphate dehydrogenase (377 aa).

The substrate site is built by Ser-59 and Thr-81. Asp-162 serves as a coordination point for NAD(+). Residue Arg-237 is part of the active site. Position 260 (Asp-260) interacts with NAD(+). Glu-265 is an active-site residue. His-282 functions as the Proton donor in the catalytic mechanism. Gly-285 contacts NAD(+). Residue Tyr-286 participates in substrate binding.

It belongs to the D-isomer specific 2-hydroxyacid dehydrogenase family. PdxB subfamily. Homodimer.

It is found in the cytoplasm. The enzyme catalyses 4-phospho-D-erythronate + NAD(+) = (R)-3-hydroxy-2-oxo-4-phosphooxybutanoate + NADH + H(+). It participates in cofactor biosynthesis; pyridoxine 5'-phosphate biosynthesis; pyridoxine 5'-phosphate from D-erythrose 4-phosphate: step 2/5. Catalyzes the oxidation of erythronate-4-phosphate to 3-hydroxy-2-oxo-4-phosphonooxybutanoate. The protein is Erythronate-4-phosphate dehydrogenase of Psychrobacter arcticus (strain DSM 17307 / VKM B-2377 / 273-4).